We begin with the raw amino-acid sequence, 91 residues long: Small ribosomal subunit protein uS19 (91 aa).

This sequence belongs to the universal ribosomal protein uS19 family.

Protein S19 forms a complex with S13 that binds strongly to the 16S ribosomal RNA. This is Small ribosomal subunit protein uS19 from Bordetella pertussis (strain Tohama I / ATCC BAA-589 / NCTC 13251).